The sequence spans 928 residues: Type II inositol 3,4-bisphosphate 4-phosphatase (928 aa).

Positions 1–13 are enriched in basic and acidic residues; that stretch reads MEIKEEGTSEEGQ. Disordered regions lie at residues 1–23, 481–516, and 548–575; these read MEIKEEGTSEEGQHFLPAAQAND, ILRKPPSPKVSTEEKSSQHDSPQQLRRQDSIPHHSD, and SRNDKSTGGDSSKDGDADPNLEDSLTSH. The region spanning 23–165 is the C2 domain; the sequence is DPEDIQFTSI…LKSKEQLLSL (143 aa). Basic and acidic residues-rich tracts occupy residues 506 to 516 and 548 to 563; these read RRQDSIPHHSD and SRNDKSTGGDSSKDGD.

The protein belongs to the inositol 3,4-bisphosphate 4-phosphatase family.

The catalysed reaction is a 1,2-diacyl-sn-glycero-3-phospho-(1D-myo-inositol-3,4-bisphosphate) + H2O = a 1,2-diacyl-sn-glycero-3-phospho-(1D-myo-inositol-3-phosphate) + phosphate. It carries out the reaction 1D-myo-inositol 3,4-bisphosphate + H2O = 1D-myo-inositol 3-phosphate + phosphate. It catalyses the reaction 1D-myo-inositol 1,3,4-trisphosphate + H2O = 1D-myo-inositol 1,3-bisphosphate + phosphate. The protein operates within signal transduction; phosphatidylinositol signaling pathway. With respect to regulation, strongly inhibited by inositol hexakisphosphate. In terms of biological role, catalyzes the hydrolysis of the 4-position phosphate of phosphatidylinositol 3,4-bisphosphate, inositol 1,3,4-trisphosphate and inositol 3,4-bisphosphate. Plays a role in the late stages of macropinocytosis by dephosphorylating phosphatidylinositol 3,4-bisphosphate in membrane ruffles. The lipid phosphatase activity is critical for tumor suppressor function. Antagonizes the PI3K-AKT/PKB signaling pathway by dephosphorylating phosphoinositides and thereby modulating cell cycle progression and cell survival. The protein is Type II inositol 3,4-bisphosphate 4-phosphatase (Inpp4b) of Rattus norvegicus (Rat).